Consider the following 149-residue polypeptide: Nucleoside diphosphate kinase (149 aa).

ATP-binding residues include lysine 9, phenylalanine 57, arginine 85, threonine 91, arginine 102, and asparagine 112. Histidine 115 (pros-phosphohistidine intermediate) is an active-site residue.

It belongs to the NDK family. Mg(2+) is required as a cofactor.

It localises to the cytoplasm. It catalyses the reaction a 2'-deoxyribonucleoside 5'-diphosphate + ATP = a 2'-deoxyribonucleoside 5'-triphosphate + ADP. The enzyme catalyses a ribonucleoside 5'-diphosphate + ATP = a ribonucleoside 5'-triphosphate + ADP. In terms of biological role, major role in the synthesis of nucleoside triphosphates other than ATP. The ATP gamma phosphate is transferred to the NDP beta phosphate via a ping-pong mechanism, using a phosphorylated active-site intermediate. This is Nucleoside diphosphate kinase from Methanoculleus marisnigri (strain ATCC 35101 / DSM 1498 / JR1).